The chain runs to 371 residues: S-adenosylmethionine:tRNA ribosyltransferase-isomerase (371 aa).

The protein belongs to the QueA family. In terms of assembly, monomer.

The protein localises to the cytoplasm. It catalyses the reaction 7-aminomethyl-7-carbaguanosine(34) in tRNA + S-adenosyl-L-methionine = epoxyqueuosine(34) in tRNA + adenine + L-methionine + 2 H(+). It functions in the pathway tRNA modification; tRNA-queuosine biosynthesis. In terms of biological role, transfers and isomerizes the ribose moiety from AdoMet to the 7-aminomethyl group of 7-deazaguanine (preQ1-tRNA) to give epoxyqueuosine (oQ-tRNA). This is S-adenosylmethionine:tRNA ribosyltransferase-isomerase from Prochlorococcus marinus (strain MIT 9303).